Reading from the N-terminus, the 303-residue chain is Coenzyme PQQ synthesis protein B (303 aa).

It belongs to the PqqB family.

The protein operates within cofactor biosynthesis; pyrroloquinoline quinone biosynthesis. May be involved in the transport of PQQ or its precursor to the periplasm. This Pseudomonas fluorescens (strain Pf0-1) protein is Coenzyme PQQ synthesis protein B.